We begin with the raw amino-acid sequence, 307 residues long: Leucine-rich repeat-containing protein 25 (307 aa).

An N-terminal signal peptide occupies residues 1–20 (MGGPLMWALLLPLLLHQAGS). Over 21-168 (QTSSCSVLSG…SCPSGLTKIA (148 aa)) the chain is Extracellular. 2 N-linked (GlcNAc...) asparagine glycosylation sites follow: asparagine 44 and asparagine 56. 2 LRR repeats span residues 63–86 (SVQL…RDLE) and 87–110 (QLQL…XXGC). Residues asparagine 95, asparagine 132, and asparagine 151 are each glycosylated (N-linked (GlcNAc...) asparagine). A helical membrane pass occupies residues 169-189 (IGALAASGSLLLVLAIAGPVL). The Cytoplasmic segment spans residues 190–307 (AWRFCRHRMD…DDEEYVVPGR (118 aa)). The tract at residues 205-249 (TWASQDGSRSGSGRQPRYSSQGRRPKSPANTPPRSSTPDYENVFV) is disordered. The segment covering 211 to 226 (GSRSGSGRQPRYSSQG) has biased composition (low complexity). The span at 232-243 (PANTPPRSSTPD) shows a compositional bias: polar residues. Phosphotyrosine is present on tyrosine 286.

As to quaternary structure, interacts with RIGI. Interacts with SQSTM1. Interacts with p65/RELA; this interaction promotes the degradation of RELA through autophagy.

The protein resides in the membrane. It localises to the cytoplasm. In terms of biological role, plays a role in the inhibition of RLR-mediated type I interferon signaling pathway by targeting RIGI for autophagic degradation. Interacts specifically with ISG15-associated RIGI to promote interaction between RIGI and the autophagic cargo receptor p62/SQSTM1 to mediate RIGI degradation via selective autophagy. Plays also a role in the inhibition of NF-kappa-B signaling pathway and inflammatory response by promoting the degradation of p65/RELA. This chain is Leucine-rich repeat-containing protein 25 (LRRC25), found in Bos taurus (Bovine).